Reading from the N-terminus, the 184-residue chain is Photosynthetic apparatus regulatory protein RegA (184 aa).

Residues 14 to 128 (SLLLVDDDNA…DITNALLAKG (115 aa)) enclose the Response regulatory domain. Residue Asp-63 is modified to 4-aspartylphosphate.

In terms of processing, phosphorylated by RegB.

In terms of biological role, member of the two-component regulatory system RegB/RegA. Involved in transactivating anaerobic expression of the photosynthetic apparatus. It is a transcriptional regulator that is responsible for activating expression of the puf, puh, and puc operons in response to a decrease in oxygen tension. In Rhodobacter capsulatus (Rhodopseudomonas capsulata), this protein is Photosynthetic apparatus regulatory protein RegA (regA).